Consider the following 188-residue polypeptide: Adenine phosphoribosyltransferase (188 aa).

Belongs to the purine/pyrimidine phosphoribosyltransferase family. In terms of assembly, homodimer.

The protein resides in the cytoplasm. The catalysed reaction is AMP + diphosphate = 5-phospho-alpha-D-ribose 1-diphosphate + adenine. It functions in the pathway purine metabolism; AMP biosynthesis via salvage pathway; AMP from adenine: step 1/1. Catalyzes a salvage reaction resulting in the formation of AMP, that is energically less costly than de novo synthesis. The polypeptide is Adenine phosphoribosyltransferase (Neisseria meningitidis serogroup C (strain 053442)).